Here is a 709-residue protein sequence, read N- to C-terminus: Protein SOSEKI 3 (709 aa).

The tract at residues 8-101 is DIX-like oligomerization domain; it reads SSVQVLYQLS…YVLRASELFD (94 aa). Disordered regions lie at residues 242–266, 315–344, 358–393, 411–439, and 506–560; these read LHTP…AKRM, RDGR…AEQS, GGSS…KTPC, PSPA…NRPS, and DSPT…DTKP. Over residues 329–342 the composition is skewed to basic and acidic residues; it reads ELREVQNEKEKEAE. The segment covering 417-436 has biased composition (basic and acidic residues); it reads NKAHSSLDRQEIPPQEECKN. Over residues 529-544 the composition is skewed to polar residues; sequence VKTSNSLPRVKTTTSP. The C2HC/C3H-type zinc finger occupies 663–692; that stretch reads ILQECSTCGRTFKPDSLQVHMRGCHPPQYA. Positions 667, 670, 682, and 686 each coordinate Zn(2+).

This sequence belongs to the SOSEKI family. In terms of assembly, homodimer. Forms long polymer filaments with other SOKs proteins polymers crucial for polar localization and biological activity. Zn(2+) is required as a cofactor.

It localises to the cell membrane. Its function is as follows. SOSEKI proteins locally interpret global polarity cues and can influence cell division orientation to coordinate cell polarization relative to body axes. This Physcomitrium patens (Spreading-leaved earth moss) protein is Protein SOSEKI 3.